A 588-amino-acid chain; its full sequence is MSKRTTYCGLVTESLLDQEVTLKGWVHNRRDLGGLIFVDLRDREGYVQIVFNPDFSEEALKTAETVRSEYVVEVKGLVKKRDPQTVNPKIATGQVEVQVSEINIINKSETPPFAINEENQNVDENIRLKYRYLDLRRQELAQTFKMRHQTTRSIRQYLDKEGFFDIETPVLTKSTPEGARDYLVPSRVHDGEFYALPQSPQIFKQLLMISGFDKYYQIVKCFRDEDLRADRQPEFTQVDIEMSFVDQEDVMDMGEEMLQNVVKDVKDVEIPRPFPRMTYNEAMERYGSDKPDTRFEMELINVSELGEEMDFKVFKDAVNNDGQVKAIVAKGAADQYTRKDIDALTEFVNIYGAKGLAWVKVVDDGLSGPIARFFETTHIEKLQSLTNAESGDLVLFVADKPNVVAQSLGALRLKLARELDLIDESKLNFLWVTDWPLLEYDEDLKRYTAAHHPFTAPKQEDIEKLDSEPENAQANAYDVVLNGYELGGGSIRIHNGELQAKMFEVLGFTEEQAQEQFGFLLDAFKYGAPPHGGIALGLDRLVMLLTGRTNLRDTIAFPKTASATCLLTDAPSEVSENQLEELSLRIRH.

Position 177 (Glu177) interacts with L-aspartate. The interval 201–204 is aspartate; it reads QIFK. Arg223 contributes to the L-aspartate binding site. Residues 223–225 and Gln232 each bind ATP; that span reads RDE. Position 451 (His451) interacts with L-aspartate. Glu485 lines the ATP pocket. Arg492 provides a ligand contact to L-aspartate. 537-540 contacts ATP; that stretch reads GLDR.

This sequence belongs to the class-II aminoacyl-tRNA synthetase family. Type 1 subfamily. In terms of assembly, homodimer.

It is found in the cytoplasm. The enzyme catalyses tRNA(Asp) + L-aspartate + ATP = L-aspartyl-tRNA(Asp) + AMP + diphosphate. In terms of biological role, catalyzes the attachment of L-aspartate to tRNA(Asp) in a two-step reaction: L-aspartate is first activated by ATP to form Asp-AMP and then transferred to the acceptor end of tRNA(Asp). This chain is Aspartate--tRNA ligase, found in Staphylococcus saprophyticus subsp. saprophyticus (strain ATCC 15305 / DSM 20229 / NCIMB 8711 / NCTC 7292 / S-41).